The primary structure comprises 317 residues: Ribose-phosphate pyrophosphokinase (317 aa).

Residues 41 to 43 (DME) and 100 to 101 (RQ) each bind ATP. Residues His134 and Asp174 each contribute to the Mg(2+) site. Lys197 is an active-site residue. Residues Arg199, Asp223, and 227–231 (DSGGT) each bind D-ribose 5-phosphate.

It belongs to the ribose-phosphate pyrophosphokinase family. Class I subfamily. In terms of assembly, homohexamer. It depends on Mg(2+) as a cofactor.

Its subcellular location is the cytoplasm. It carries out the reaction D-ribose 5-phosphate + ATP = 5-phospho-alpha-D-ribose 1-diphosphate + AMP + H(+). The protein operates within metabolic intermediate biosynthesis; 5-phospho-alpha-D-ribose 1-diphosphate biosynthesis; 5-phospho-alpha-D-ribose 1-diphosphate from D-ribose 5-phosphate (route I): step 1/1. Its function is as follows. Involved in the biosynthesis of the central metabolite phospho-alpha-D-ribosyl-1-pyrophosphate (PRPP) via the transfer of pyrophosphoryl group from ATP to 1-hydroxyl of ribose-5-phosphate (Rib-5-P). The chain is Ribose-phosphate pyrophosphokinase from Bradyrhizobium diazoefficiens (strain JCM 10833 / BCRC 13528 / IAM 13628 / NBRC 14792 / USDA 110).